The primary structure comprises 344 residues: Thioredoxin reductase FGSG_00043 (344 aa).

FAD is bound by residues 12 to 15, 34 to 39, histidine 51, and alanine 121; these read GGPA and DSVSYR. A disulfide bridge links cysteine 165 with cysteine 168. Residues aspartate 314 and 321-322 contribute to the FAD site; that span reads FV.

It belongs to the class-II pyridine nucleotide-disulfide oxidoreductase family. Homodimer. FAD is required as a cofactor.

It participates in mycotoxin biosynthesis. Its function is as follows. Thioredoxin reductase; part of the gene cluster that mediates the biosynthesis of gramillins A and B, bicyclic lipopeptides that induce cell death in maize leaves but not in wheat leaves. The nonribosomal peptide synthetase GRA1 incorporates respectively a glutamic adic (Glu), a leucine (Leu), a serine (Ser), a hydroxyglutamine (HOGln), a 2-amino decanoic acid, and 2 cysteins (CysB and CysA). The biosynthesis of 2-amino decanoic acid incorporated in gramillins could be initiated by a fatty acid synthase composed of the alpha and beta subunits FGSG_00036 and FGSG_11656. The cytochrome P450 monooxygenase FGSG_15680 could hydroxylate the fatty acid chain. Subsequent oxidation to the ketone by the oxidoreductase FGSG_00048 and transamination by aminotransferase FGSG_00049 could form 2-amino-decanoic acid. On the other hand, FGSG_15680 could also be responsible for the HO-modified glutamine at the gamma-position. Whether hydroxylation occurs on the fully assembled product or on the Gln residue prior to assembly into the gramillins requires further proof. The thioredoxin FGSG_00043 could also be required for the disulfide-bond formation between CysA and CysB. The specific involvement of the remaining proteins from the cluster is more difficult to discern, but could have broader regulatory (FGSG_00040 and FGSG_11657) or enzymatic functions (FGSG_00044 and FGSG_00045). The final C-domain of GRA1 does not possess the expected sequence of a termination CT domain, often implicated in macrocyclization and release of a cyclopeptidein fungal NRPs; and the thioesterase FGSG_00047 may act in concert with the terminal C-domain of GRA1 to catalyze the formation of the macrocyclic anhydride and release of the products. The sequence is that of Thioredoxin reductase FGSG_00043 from Gibberella zeae (strain ATCC MYA-4620 / CBS 123657 / FGSC 9075 / NRRL 31084 / PH-1) (Wheat head blight fungus).